A 223-amino-acid polypeptide reads, in one-letter code: UPF0173 metal-dependent hydrolase Amet_4625 (223 aa).

It belongs to the UPF0173 family.

This chain is UPF0173 metal-dependent hydrolase Amet_4625, found in Alkaliphilus metalliredigens (strain QYMF).